Here is a 98-residue protein sequence, read N- to C-terminus: Secreted LysM effector Mgx1LysM (98 aa).

A signal peptide spans M1–A18. Disulfide bonds link C31/C89 and C62/C97. A LysM domain is found at I37–I85. G44, T48, N75, and I77 together coordinate chitin.

The protein belongs to the secreted LysM effector family. Forms homodimers in a chitin-independent manner through interactions at the N-termini of Mgx1LysM monomers. Homodimers are further polymerized in a chitin-dependent manner.

It localises to the secreted. Its subcellular location is the cell wall. In terms of biological role, secreted effector that enables the plant pathogenic fungus to manipulate host defenses for successful infection. Binds chitin and suppresses the chitin-induced reactive oxygen species (ROS) burst. Chitin-induced polymerization of homodimers forms a contiguous Mg1LysM highly oligomeric super-complexe that is anchored to the chitin in the fungal cell wall to prevent hydrolysis by host chitinases. This chain is Secreted LysM effector Mgx1LysM, found in Zymoseptoria tritici (strain ST99CH_3D7).